Consider the following 149-residue polypeptide: Large ribosomal subunit protein uL13 (149 aa).

This sequence belongs to the universal ribosomal protein uL13 family. As to quaternary structure, part of the 50S ribosomal subunit.

This protein is one of the early assembly proteins of the 50S ribosomal subunit, although it is not seen to bind rRNA by itself. It is important during the early stages of 50S assembly. The polypeptide is Large ribosomal subunit protein uL13 (Chlorobium phaeobacteroides (strain DSM 266 / SMG 266 / 2430)).